The primary structure comprises 340 residues: Ribosomal RNA small subunit methyltransferase C (340 aa).

It belongs to the methyltransferase superfamily. RsmC family. In terms of assembly, monomer.

Its subcellular location is the cytoplasm. The enzyme catalyses guanosine(1207) in 16S rRNA + S-adenosyl-L-methionine = N(2)-methylguanosine(1207) in 16S rRNA + S-adenosyl-L-homocysteine + H(+). In terms of biological role, specifically methylates the guanine in position 1207 of 16S rRNA in the 30S particle. This Vibrio cholerae serotype O1 (strain ATCC 39541 / Classical Ogawa 395 / O395) protein is Ribosomal RNA small subunit methyltransferase C.